The following is an 816-amino-acid chain: Probable transcriptional regulator SLK2 (816 aa).

Disordered regions lie at residues 133 to 153 (HDPS…SQTN) and 166 to 189 (SFFQ…KQDD). Polar residues-rich tracts occupy residues 139-153 (LGGS…SQTN) and 166-176 (SFFQDPNNLTQ). The dimerization stretch occupies residues 307–554 (PSESSIVYWR…DQKVGPIEAL (248 aa)). Residues 316-330 (RKFVTEYFSPRAKKR) carry the Nuclear localization signal motif. Composition is skewed to polar residues over residues 644 to 662 (IQQE…QGTS) and 672 to 711 (PSIS…SGNQ). The tract at residues 644-711 (IQQEPSRNRS…QPPSCSSGNQ (68 aa)) is disordered.

This sequence belongs to the adn1/SEU family. Forms corepressor complexes with LUH; LUH is the transcription repressor subunit and SLK2 the specific DNA-binding adapters. As to expression, expressed in young flower meristems, ovules and the carpel margin meristem.

The protein resides in the nucleus. Its function is as follows. Probable transcription regulator that functions in the development of the carpel margin meristem similarly to SEUSS (SEU). In association with SEU, supports organ development from meristematic regions by facilitating auxin response and thus organ initiation, and by sustaining meristematic potential through the maintenance of PHABULOSA expression. DNA-binding adapter subunit of the SEU-SLK2 transcriptional corepressor of abiotic stress (e.g. salt and osmotic stress) response genes. The polypeptide is Probable transcriptional regulator SLK2 (SLK2) (Arabidopsis thaliana (Mouse-ear cress)).